Reading from the N-terminus, the 203-residue chain is ATP-dependent Clp protease proteolytic subunit 2 (203 aa).

Ser-97 functions as the Nucleophile in the catalytic mechanism. His-122 is an active-site residue.

It belongs to the peptidase S14 family. Fourteen ClpP subunits assemble into 2 heptameric rings which stack back to back to give a disk-like structure with a central cavity, resembling the structure of eukaryotic proteasomes.

It localises to the cytoplasm. The enzyme catalyses Hydrolysis of proteins to small peptides in the presence of ATP and magnesium. alpha-casein is the usual test substrate. In the absence of ATP, only oligopeptides shorter than five residues are hydrolyzed (such as succinyl-Leu-Tyr-|-NHMec, and Leu-Tyr-Leu-|-Tyr-Trp, in which cleavage of the -Tyr-|-Leu- and -Tyr-|-Trp bonds also occurs).. Cleaves peptides in various proteins in a process that requires ATP hydrolysis. Has a chymotrypsin-like activity. Plays a major role in the degradation of misfolded proteins. This chain is ATP-dependent Clp protease proteolytic subunit 2, found in Myxococcus xanthus (strain DK1622).